The sequence spans 376 residues: MQTFLVIIFMMVIGALIGGVTNVIAVKMLFHPFKTYYIFKKRVPFTPGLIPNRRKEIADKIGQVVEEHLLTEEVIQAKLNAPTSRDAIEEIIFKQIAKLKENHTTIQSLADIVDIDFSKTANQKLDELISDKMDNFYLDYQNTPIQQLIPNDIESSIDDKVALLPELLFDRARVYLKSEKGGADIASMLDTFFNEKGKIVGMLQMFMTKESIAERIQHELIRLTSHPKAKAIATQIIENEYATMKSKQLNELINETQYQAFKTSVTELALRYVDLEQTSHKPLHTIMPRFISFLETKVSKTLTDVIIDNASKHLSPIMKKINLRQMVEEQINTFDLAYIEKLIIDIANKELKLIMFLGFLLGGIIGLFQGVIAIFV.

2 helical membrane passes run 4–24 and 356–376; these read FLVIIFMMVIGALIGGVTNVI and FLGFLLGGIIGLFQGVIAIFV.

Belongs to the UPF0754 family.

The protein localises to the cell membrane. The protein is UPF0754 membrane protein SSP0953 of Staphylococcus saprophyticus subsp. saprophyticus (strain ATCC 15305 / DSM 20229 / NCIMB 8711 / NCTC 7292 / S-41).